Consider the following 427-residue polypeptide: Steroid C26-monooxygenase (427 aa).

Cys-360 contacts heme.

The protein belongs to the cytochrome P450 family. It depends on heme as a cofactor.

The enzyme catalyses cholest-4-en-3-one + 6 reduced [2Fe-2S]-[ferredoxin] + 3 O2 + 5 H(+) = (25S)-3-oxocholest-4-en-26-oate + 6 oxidized [2Fe-2S]-[ferredoxin] + 4 H2O. The protein operates within steroid metabolism; cholesterol degradation. Functionally, involved in the utilization of cholesterol as the sole carbon and energy source by degrading the side chain. Primarily catalyzes the sequential oxidation of the terminal methyl of cholest-4-en-3-one into (25S)-26-hydroxycholest-4-en-3-one (alcohol), (25S)-26-oxocholest-4-en-3-one (aldehyde), to finally yield the carboxylic acid (25S)-3-oxocholest-4-en-26-oate. Also able to sequentially oxidize cholesterol itself, not only cholest-4-en-3-one. This is Steroid C26-monooxygenase from Mycolicibacterium smegmatis (strain ATCC 700084 / mc(2)155) (Mycobacterium smegmatis).